The following is a 216-amino-acid chain: Adenylate kinase (216 aa).

An ATP-binding site is contributed by 10 to 15 (GAGKGT). The NMP stretch occupies residues 30-59 (STGDMLRAAVGVGTEVGKRAKAVMDAGKLV). AMP is bound by residues threonine 31, arginine 36, 57-59 (KLV), 85-88 (GFPR), and glutamine 92. The segment at 126–163 (GRYTCAQCGTVYHDTDKVPVEEGVCDKCGSTHFKRRPD) is LID. Arginine 127 is an ATP binding site. Residues cysteine 130 and cysteine 133 each contribute to the Zn(2+) site. 136–137 (VY) is a binding site for ATP. Residues cysteine 150 and cysteine 153 each contribute to the Zn(2+) site. Arginine 160 and arginine 172 together coordinate AMP. Residue alanine 200 participates in ATP binding.

It belongs to the adenylate kinase family. In terms of assembly, monomer.

The protein resides in the cytoplasm. The enzyme catalyses AMP + ATP = 2 ADP. It functions in the pathway purine metabolism; AMP biosynthesis via salvage pathway; AMP from ADP: step 1/1. In terms of biological role, catalyzes the reversible transfer of the terminal phosphate group between ATP and AMP. Plays an important role in cellular energy homeostasis and in adenine nucleotide metabolism. The protein is Adenylate kinase of Rhizobium etli (strain CIAT 652).